Here is a 609-residue protein sequence, read N- to C-terminus: PTS system beta-glucoside-specific EIIBCA component (609 aa).

A PTS EIIB type-1 domain is found at 1–86; the sequence is MDYDKLSKDI…VRHSNLSDEK (86 aa). Residue Cys-26 is the Phosphocysteine intermediate; for EIIB activity of the active site. The 357-residue stretch at 103–459 folds into the PTS EIIC type-1 domain; the sequence is DVISGVFTPI…GSQQPAVHEG (357 aa). 10 consecutive transmembrane segments (helical) span residues 112–132, 141–161, 174–194, 202–222, 246–266, 281–301, 321–341, 351–371, 379–399, and 412–432; these read ILPAIAGAGMIKGLVALAVTF, VHVILTAVGDGAFYFLPLLLA, VAAAIAAAILHPDLTALLGAG, LPVTAATYSSTVIPILLSIWI, FTLLIVVPLTLITVGPLGAIL, AGLVAMILLAGTFSLIIMTGM, LLPAMFLANMGQAGASFAVFL, LALTTSITALMGITEPAMYGV, FAAALIGGAAGGAFYGMTGVA, and IPVFIGPTFIYAMIGLVIAFA. The PTS EIIA type-1 domain maps to 480-584; sequence DGVFSAGVMG…DVITPVIVTN (105 aa). His-532 (tele-phosphohistidine intermediate; for EIIA activity) is an active-site residue.

The protein resides in the cell membrane. In terms of biological role, the phosphoenolpyruvate-dependent sugar phosphotransferase system (sugar PTS), a major carbohydrate active -transport system, catalyzes the phosphorylation of incoming sugar substrates concomitantly with their translocation across the cell membrane. This system is involved in beta-glucoside transport. The polypeptide is PTS system beta-glucoside-specific EIIBCA component (bglP) (Bacillus subtilis (strain 168)).